The sequence spans 177 residues: Embryogenesis-like protein (177 aa).

Residues 98–118 (VDEINLKFAEAREEIEMAMDA) adopt a coiled-coil conformation.

Interacts with HAG1/GCN5. Expressed in flowers, leaves, stems and siliques.

Its subcellular location is the nucleus. Functionally, activates gene expression by recruiting HAG1/GCN5 and triggering subsequent histone H3 acetylation of target genes promoters. This chain is Embryogenesis-like protein, found in Arabidopsis thaliana (Mouse-ear cress).